The primary structure comprises 601 residues: MVSFTLRAIGACLVSLPALVTAAPTSHISGDFQVLEQLHEVPQGWVQTGSPAPSSQLKFKLALQQDKAAAFEQHVMDISNPKHENYGKHMTQEEVDAFLQPPAHMTDSVFNWLASEGIPKHSIKADTDWLTFTTTVQKAEKLLNTRFYNFKNTIDNTQVIRTLQYSVAETVAPYVHMIQPTTKFSAPRPELSSVFTSDLEITSSADVDCNVTITPDCIRDLYKMGNTFAKKDPRNRLGISGYLEQYARLDDFSTFIDMFVPSLKGTTFDFKSINGGKNEQNSSLDSVEASLDVDYAIGLSGALSTYYGTAGRGMLIPDLDQPNITNNNNEPYLEQLHYLLGLPDSELPAVLSTSYGENEQSVPKKYTDSACHLFARLGARGVSVIFSSGDTGVGSACQSNDGKKITKFNPIFPAACPFVTSVGGTHQINPEVAIHFSSGGFSERFSRPWYQELDVNHYLQHELEHGKWDGMYNPSGRGFPDVSAQSYKFATRDHGRTIGVSGTSASAPLFAGVVSILNSIRLAHHKPRLGFLNPWLYTIGRSGFTDIVHGGSDGCTGTDQYSHLPTPYVPGASWNATRGWDPVTGLGTPNFETLSKLVLQY.

Residues 1–22 form the signal peptide; it reads MVSFTLRAIGACLVSLPALVTA. The propeptide at 23-202 is removed in mature form; sequence APTSHISGDF…SVFTSDLEIT (180 aa). N-linked (GlcNAc...) asparagine glycans are attached at residues asparagine 210 and asparagine 281. The Peptidase S53 domain occupies 212 to 601; sequence TITPDCIRDL…ETLSKLVLQY (390 aa). Active-site charge relay system residues include glutamate 288 and aspartate 292. The N-linked (GlcNAc...) asparagine glycan is linked to asparagine 323. Serine 504 functions as the Charge relay system in the catalytic mechanism. Residues aspartate 546 and isoleucine 547 each coordinate Ca(2+). Asparagine 575 carries N-linked (GlcNAc...) asparagine glycosylation. Ca(2+)-binding residues include glycine 579 and aspartate 581.

Ca(2+) is required as a cofactor.

It localises to the secreted. Its subcellular location is the extracellular space. The enzyme catalyses Release of an N-terminal tripeptide from a polypeptide.. Functionally, secreted tripeptidyl-peptidase which degrades proteins at acidic pHs and is involved in virulence. The chain is Tripeptidyl-peptidase SED4 (SED4) from Arthroderma otae (strain ATCC MYA-4605 / CBS 113480) (Microsporum canis).